The primary structure comprises 321 residues: YIDGDKGILLYRGYPIDQLAEKGDFLESCYLLLYGELPTQQEKNDFDRCIMQHTMVHEQFSRFFHGFRRDSHPMAVMVACLGAMSAFYHDSIDITDPHQRMIASVRLISKVPTLAAMAYKYSIGQAFVYPRNDLSYAANFLRMCFAVPCEEYKINPVLARAMDQIFILHADHEQNASTSTVRLAGSSGANPFACIAAGVACLWGPAHGGANEACLKMLQEIGSIKRIPEFIARAKDKNDPFRLMGFGHRVYKNYDPRAKIMQKTCHEVLKELNIQDDPLLDIAIELEKIALSDEYFIEKKLYPNVDFYSGITLKALGFPTE.

Catalysis depends on residues H248 and D306.

It belongs to the citrate synthase family.

It catalyses the reaction oxaloacetate + acetyl-CoA + H2O = citrate + CoA + H(+). The protein operates within carbohydrate metabolism; tricarboxylic acid cycle; isocitrate from oxaloacetate: step 1/2. The protein is Citrate synthase (gltA) of Bartonella elizabethae (Rochalimaea elizabethae).